The following is a 1470-amino-acid chain: Collagen alpha-1(XVII) chain (1470 aa).

Disordered stretches follow at residues 1–155 (MDVT…PSTR), 167–193 (KGSR…GTVE), and 422–452 (SAEN…GGAS). The Cytoplasmic portion of the chain corresponds to 1–476 (MDVTKKSKRD…CGSCCSWWKW (476 aa)). Residues 1 to 573 (MDVTKKSKRD…MTEQENGNLR (573 aa)) are nonhelical region (NC16). Residues 9–19 (RDGTEVTERIV) show a composition bias toward basic and acidic residues. The span at 60–74 (GSSGYINSSGSIRGN) shows a compositional bias: low complexity. Polar residues-rich tracts occupy residues 75–96 (ASTS…SPGS), 111–120 (EGSSSGNSSP), and 170–184 (RSAS…SNTL). The necessary for interaction with DST and for the recruitment of DST to hemidesmosome stretch occupies residues 146 to 231 (RLQSASPSTR…WSSTLPAGSS (86 aa)). The segment covering 430–452 (RGGGGGRGKGGGAGGGGGGGGAS) has biased composition (gly residues). A helical; Signal-anchor for type II membrane protein membrane pass occupies residues 477–497 (LLGLLLTWLLLLGLLFGLIAL). At 498–1470 (AEEVRKLKAR…RRKRSIAIKP (973 aa)) the chain is on the extracellular side. Phosphoserine; by CK2 is present on serine 551. Disordered regions lie at residues 568–873 (ENGN…FLSS), 885–999 (GVDL…SSSG), 1159–1181 (DYRN…NAWS), 1194–1220 (TAGL…GVSA), and 1249–1298 (FIVG…TNGG). The triple-helical region stretch occupies residues 574–1456 (GSPGPKGDMG…KGEKGDKGDQ (883 aa)). Over residues 597–609 (PGIPGPLGHPGPE) the composition is skewed to pro residues. 2 stretches are compositionally biased toward low complexity: residues 742 to 755 (EPGA…AGAD) and 781 to 803 (DPGK…PGRP). The segment covering 827-848 (PGPPGPPGAMGPPGPPGTPGPA) has biased composition (pro residues). Positions 850–873 (PAGLPGQQGPRGEPGLAGDSFLSS) are enriched in low complexity. Pro residues-rich tracts occupy residues 891–914 (PPGP…PRGP), 940–949 (PPGPPGPPGP), 982–992 (PPGPPGPPGPP), 1166–1175 (PPGPPGPPGM), 1201–1215 (PGPP…PRGP), and 1253–1262 (PPGPPGPQGP). Asparagine 1273 is a glycosylation site (N-linked (GlcNAc...) asparagine). Positions 1275–1290 (SSNSSARRGTSYSSST) are enriched in low complexity. Residue asparagine 1395 is glycosylated (N-linked (GlcNAc...) asparagine). The segment at 1406 to 1470 (TYGTIPGPPG…RRKRSIAIKP (65 aa)) is disordered. Positions 1434 to 1443 (PRGPPGPPGP) are enriched in pro residues. The segment covering 1446–1455 (NKGEKGDKGD) has biased composition (basic and acidic residues). The interval 1457–1470 (VYTGRRKRSIAIKP) is nonhelical region (NC1). Positions 1460–1470 (GRRKRSIAIKP) are enriched in basic residues.

As to quaternary structure, homotrimers of alpha 1(XVII)chains. Interacts (via cytoplasmic region) with ITGB4 (via cytoplasmic region). Interacts (via cytoplasmic region) with DST (via N-terminus). Interacts (via N-terminus) with PLEC. Interacts (via cytoplasmic region) with DSP. The intracellular/endo domain is disulfide-linked. In terms of processing, prolines at the third position of the tripeptide repeating unit (G-X-Y) are hydroxylated in some or all of the chains. Post-translationally, the ectodomain is shedded from the surface of keratinocytes resulting in a 120-kDa soluble form, also named as 120 kDa linear IgA disease antigen homolog. The shedding is mediated by membrane-bound metalloproteases. This cleavage is inhibited by phosphorylation at Ser-551.

Its subcellular location is the cell junction. It is found in the hemidesmosome. The protein resides in the membrane. The protein localises to the secreted. It localises to the extracellular space. Its subcellular location is the extracellular matrix. It is found in the basement membrane. Functionally, may play a role in the integrity of hemidesmosome and the attachment of basal keratinocytes to the underlying basement membrane. The 120 kDa linear IgA disease antigen homolog is an anchoring filament component involved in dermal-epidermal cohesion. The chain is Collagen alpha-1(XVII) chain (Col17a1) from Mus musculus (Mouse).